Here is a 196-residue protein sequence, read N- to C-terminus: DnaA initiator-associating protein DiaA (196 aa).

The 163-residue stretch at 34–196 (LVQSLLNGNK…DNTLFPHQDD (163 aa)) folds into the SIS domain.

Belongs to the SIS family. DiaA subfamily. In terms of assembly, homotetramer; dimer of dimers.

In terms of biological role, required for the timely initiation of chromosomal replication via direct interactions with the DnaA initiator protein. The sequence is that of DnaA initiator-associating protein DiaA from Enterobacter sp. (strain 638).